The primary structure comprises 234 residues: Glucosamine-6-phosphate deaminase (234 aa).

Aspartate 62 acts as the Proton acceptor; for enolization step in catalysis. Asparagine 128 serves as the catalytic For ring-opening step. The active-site Proton acceptor; for ring-opening step is the histidine 130. Catalysis depends on glutamate 135, which acts as the For ring-opening step.

The protein belongs to the glucosamine/galactosamine-6-phosphate isomerase family. NagB subfamily.

It catalyses the reaction alpha-D-glucosamine 6-phosphate + H2O = beta-D-fructose 6-phosphate + NH4(+). Its pathway is amino-sugar metabolism; N-acetylneuraminate degradation; D-fructose 6-phosphate from N-acetylneuraminate: step 5/5. Catalyzes the reversible isomerization-deamination of glucosamine 6-phosphate (GlcN6P) to form fructose 6-phosphate (Fru6P) and ammonium ion. This Streptococcus equi subsp. zooepidemicus (strain MGCS10565) protein is Glucosamine-6-phosphate deaminase.